The chain runs to 159 residues: MNIRIGHGFDVHKFGGDSPLVLGGVTVPYDSGLIAHSDGDVVLHAISDAILGAMALGDIGKHFPDTDANFAGADSRVLLKHCYQLALQKQFVLGNLDVTIIAQAPKMAPHIEAIRQCLSADLQTDIDNINVKATTTENLGFTGRKEGIAVEAVVLMKSQ.

Asp10 and His12 together coordinate a divalent metal cation. 4-CDP-2-C-methyl-D-erythritol 2-phosphate-binding positions include 10–12 and 36–37; these read DVH and HS. His44 contributes to the a divalent metal cation binding site. 4-CDP-2-C-methyl-D-erythritol 2-phosphate contacts are provided by residues 58 to 60, 63 to 67, 102 to 108, 134 to 137, Phe141, and Arg144; these read DIG, FPDTD, AQAPKMA, and TTTE.

The protein belongs to the IspF family. Homotrimer. The cofactor is a divalent metal cation.

The enzyme catalyses 4-CDP-2-C-methyl-D-erythritol 2-phosphate = 2-C-methyl-D-erythritol 2,4-cyclic diphosphate + CMP. Its pathway is isoprenoid biosynthesis; isopentenyl diphosphate biosynthesis via DXP pathway; isopentenyl diphosphate from 1-deoxy-D-xylulose 5-phosphate: step 4/6. Involved in the biosynthesis of isopentenyl diphosphate (IPP) and dimethylallyl diphosphate (DMAPP), two major building blocks of isoprenoid compounds. Catalyzes the conversion of 4-diphosphocytidyl-2-C-methyl-D-erythritol 2-phosphate (CDP-ME2P) to 2-C-methyl-D-erythritol 2,4-cyclodiphosphate (ME-CPP) with a corresponding release of cytidine 5-monophosphate (CMP). This chain is 2-C-methyl-D-erythritol 2,4-cyclodiphosphate synthase, found in Shewanella frigidimarina (strain NCIMB 400).